The chain runs to 324 residues: tRNA pseudouridine synthase B (324 aa).

The Nucleophile role is filled by D49. The segment at 87 to 107 (RSTDDLEGQPTKTSDKRPSRE) is disordered.

Belongs to the pseudouridine synthase TruB family. Type 1 subfamily.

The catalysed reaction is uridine(55) in tRNA = pseudouridine(55) in tRNA. In terms of biological role, responsible for synthesis of pseudouridine from uracil-55 in the psi GC loop of transfer RNAs. The polypeptide is tRNA pseudouridine synthase B (Brucella melitensis biotype 1 (strain ATCC 23456 / CCUG 17765 / NCTC 10094 / 16M)).